The following is a 1017-amino-acid chain: Anaphase-promoting complex subunit 5 (1017 aa).

TPR repeat units lie at residues 30–63 (KQSL…EKEL), 182–214 (DMSM…SPLD), 252–286 (VKRV…VNGQ), 337–370 (PYAV…AQER), and 508–541 (NNNN…WNDI). Positions 451–525 (INSNNYNSNN…NNNSSNSNNN (75 aa)) are enriched in low complexity. 2 disordered regions span residues 451–527 (INSN…NNGG) and 617–636 (NNNN…QQQN). 5 TPR repeats span residues 642–675 (LLSF…YKTQ), 756–790 (VICY…SRDF), 838–871 (ADSN…VLSD), 876–908 (SQLY…FLQL), and 931–964 (KEIY…LVPS).

Belongs to the APC5 family. In terms of assembly, the APC/C is composed of at least 13 subunits that stay tightly associated throughout the cell cycle: anapc1, anapc2, anapc3, anapc4, anapc5, anapc6, anapc7, anapc8, anapc10, anapc11, cdc20, cdc26 and cdh1.

Its subcellular location is the nucleus. The protein operates within protein modification; protein ubiquitination. Component of the anaphase promoting complex/cyclosome (APC/C), a cell cycle-regulated E3 ubiquitin-protein ligase complex that controls progression through mitosis and the G1 phase of the cell cycle. This Dictyostelium discoideum (Social amoeba) protein is Anaphase-promoting complex subunit 5 (anapc5).